The following is a 239-amino-acid chain: Ribosomal RNA large subunit methyltransferase E (239 aa).

The S-adenosyl-L-methionine site is built by G88, W90, D111, D127, and D151. K191 (proton acceptor) is an active-site residue.

The protein belongs to the class I-like SAM-binding methyltransferase superfamily. RNA methyltransferase RlmE family.

It is found in the cytoplasm. The catalysed reaction is uridine(2552) in 23S rRNA + S-adenosyl-L-methionine = 2'-O-methyluridine(2552) in 23S rRNA + S-adenosyl-L-homocysteine + H(+). Its function is as follows. Specifically methylates the uridine in position 2552 of 23S rRNA at the 2'-O position of the ribose in the fully assembled 50S ribosomal subunit. The chain is Ribosomal RNA large subunit methyltransferase E from Bartonella bacilliformis (strain ATCC 35685 / KC583 / Herrer 020/F12,63).